Consider the following 460-residue polypeptide: CUGBP Elav-like family member 6 (460 aa).

The span at 1–10 (MAAAPGGSAP) shows a compositional bias: low complexity. The interval 1 to 37 (MAAAPGGSAPPAGPSPRLAFSTADSGGGMSGLNPGPA) is disordered. RRM domains lie at 46-127 (IKLF…PAAS) and 134-214 (RKLF…LADT). The segment at 316–336 (NGFGSLTPQSNGQPGSDTLYN) is disordered. Residues 319 to 336 (GSLTPQSNGQPGSDTLYN) are compositionally biased toward polar residues. Residues 375–453 (CNLFIYHLPQ…KRLKVQLKRP (79 aa)) form the RRM 3 domain.

The protein belongs to the CELF/BRUNOL family.

The protein resides in the nucleus. It localises to the cytoplasm. RNA-binding protein implicated in the regulation of pre-mRNA alternative splicing. Mediates exon inclusion and/or exclusion in pre-mRNA that are subject to tissue-specific and developmentally regulated alternative splicing. Specifically activates exon 5 inclusion of TNNT2 in a muscle-specific splicing enhancer (MSE)-dependent manner. Promotes also exon exclusion of INSR pre-mRNA. This chain is CUGBP Elav-like family member 6 (Celf6), found in Mus musculus (Mouse).